The primary structure comprises 346 residues: D-alanine--D-alanine ligase (346 aa).

The ATP-grasp domain occupies K125–R325. F151–T206 serves as a coordination point for ATP. Mg(2+)-binding residues include D278, E292, and N294.

It belongs to the D-alanine--D-alanine ligase family. Mg(2+) serves as cofactor. The cofactor is Mn(2+).

The protein localises to the cytoplasm. It catalyses the reaction 2 D-alanine + ATP = D-alanyl-D-alanine + ADP + phosphate + H(+). It participates in cell wall biogenesis; peptidoglycan biosynthesis. Functionally, cell wall formation. This chain is D-alanine--D-alanine ligase, found in Albidiferax ferrireducens (strain ATCC BAA-621 / DSM 15236 / T118) (Rhodoferax ferrireducens).